We begin with the raw amino-acid sequence, 1711 residues long: MSAKVRLKKLEQLLLDGPWRNESALSVETLLDVLVCLYTECSHSALRRDKYVAEFLEWAKPFTQLVKEMQLHREDFEIIKVIGRGAFGEVAVVKMKNTERIYAMKILNKWEMLKRAETACFREERDVLVNGDCQWITALHYAFQDENHLYLVMDYYVGGDLLTLLSKFEDKLPEDMARFYIGEMVLAIDSIHQLHYVHRDIKPDNVLLDVNGHIRLADFGSCLKMNDDGTVQSSVAVGTPDYISPEILQAMEDGMGKYGPECDWWSLGVCMYEMLYGETPFYAESLVETYGKIMNHEERFQFPSHVTDVSEEAKDLIQRLICSRERRLGQNGIEDFKKHAFFEGLNWENIRNLEAPYIPDVSSPSDTSNFDVDDDVLRNTEILPPGSHTGFSGLHLPFIGFTFTTESCFSDRGSLKSIMQSNTLTKDEDVQRDLEHSLQMEAYERRIRRLEQEKLELSRKLQESTQTVQSLHGSSRALSNSNRDKEIKKLNEEIERLKNKIADSNRLERQLEDTVALRQEREDSTQRLRGLEKQHRVVRQEKEELHKQLVEASERLKSQAKELKDAHQQRKLALQEFSELNERMAELRAQKQKVSRQLRDKEEEMEVATQKVDAMRQEMRRAEKLRKELEAQLDDAVAEASKERKLREHSENFCKQMESELEALKVKQGGRGAGATLEHQQEISKIKSELEKKVLFYEEELVRREASHVLEVKNVKKEVHDSESHQLALQKEILMLKDKLEKSKRERHNEMEEAVGTIKDKYERERAMLFDENKKLTAENEKLCSFVDKLTAQNRQLEDELQDLAAKKESVAHWEAQIAEIIQWVSDEKDARGYLQALASKMTEELEALRSSSLGSRTLDPLWKVRRSQKLDMSARLELQSALEAEIRAKQLVQEELRKVKDANLTLESKLKDSEAKNRELLEEMEILKKKMEEKFRADTGLKLPDFQDSIFEYFNTAPLAHDLTFRTSSASEQETQAPKPEASPSMSVAASEQQEDMARPPQRPSAVPLPTTQALALAGPKPKAHQFSIKSFSSPTQCSHCTSLMVGLIRQGYACEVCSFACHVSCKDGAPQVCPIPPEQSKRPLGVDVQRGIGTAYKGHVKVPKPTGVKKGWQRAYAVVCDCKLFLYDLPEGKSTQPGVIASQVLDLRDDEFSVSSVLASDVIHATRRDIPCIFRVTASLLGAPSKTSSLLILTENENEKRKWVGILEGLQSILHKNRLRNQVVHVPLEAYDSSLPLIKAILTAAIVDADRIAVGLEEGLYVIEVTRDVIVRAADCKKVHQIELAPREKIVILLCGRNHHVHLYPWSSLDGAEGSFDIKLPETKGCQLMATATLKRNSGTCLFVAVKRLILCYEIQRTKPFHRKFNEIVAPGSVQCLAVLRDRLCVGYPSGFCLLSIQGDGQPLNLVNPNDPSLAFLSQQSFDALCAVELESEEYLLCFSHMGLYVDPQGRRARAQELMWPAAPVACSCSPTHVTVYSEYGVDVFDVRTMEWVQTIGLRRIRPLNSEGTLNLLNCEPPRLIYFKSKFSGAVLNVPDTSDNSKKQMLRTRSKRRFVFKVPEEERLQQRREMLRDPELRSKMISNPTNFNHVAHMGPGDGMQVLMDLPLSAVPPSQEERPGPAPTNLARQPPSRNKPYISWPSSGGSEPSVTVPLRSMSDPDQDFDKEPDSDSTKHSTPSNSSNPSGPPSPNSPHRSQLPLEGLEQPACDT.

In terms of domain architecture, Protein kinase spans 76–342 (FEIIKVIGRG…IEDFKKHAFF (267 aa)). ATP-binding positions include 82-90 (IGRGAFGEV) and Lys105. The Proton acceptor role is filled by Asp200. 2 positions are modified to phosphoserine; by autocatalysis: Ser221 and Ser233. At Thr239 the chain carries Phosphothreonine; by autocatalysis. The AGC-kinase C-terminal domain maps to 343–413 (EGLNWENIRN…TTESCFSDRG (71 aa)). Thr423 bears the Phosphothreonine mark. 2 coiled-coil regions span residues 431–815 (QRDL…AHWE) and 878–939 (ELQS…FRAD). The interval 461-484 (LQESTQTVQSLHGSSRALSNSNRD) is disordered. Residues 463–481 (ESTQTVQSLHGSSRALSNS) show a composition bias toward polar residues. Arg671 is subject to Omega-N-methylarginine. Tyr954 bears the Phosphotyrosine mark. A disordered region spans residues 969–1009 (SSASEQETQAPKPEASPSMSVAASEQQEDMARPPQRPSAVP). A Phorbol-ester/DAG-type zinc finger spans residues 1025 to 1075 (AHQFSIKSFSSPTQCSHCTSLMVGLIRQGYACEVCSFACHVSCKDGAPQVC). In terms of domain architecture, PH spans 1095–1214 (GTAYKGHVKV…WVGILEGLQS (120 aa)). One can recognise a CNH domain in the interval 1240–1513 (IKAILTAAIV…RPLNSEGTLN (274 aa)). Residues 1583–1596 (ISNPTNFNHVAHMG) enclose the CRIB domain. The segment at 1611–1711 (AVPPSQEERP…EGLEQPACDT (101 aa)) is disordered. The span at 1641-1650 (WPSSGGSEPS) shows a compositional bias: polar residues. Positions 1664–1675 (DFDKEPDSDSTK) are enriched in basic and acidic residues. A phosphoserine mark is found at Ser1680, Ser1682, Ser1686, Ser1690, and Ser1693.

It belongs to the protein kinase superfamily. AGC Ser/Thr protein kinase family. DMPK subfamily. In terms of assembly, homodimer and homotetramer via the coiled coil regions. Interacts tightly with GTP-bound but not GDP-bound CDC42. Interacts with TJP1, when in the presence of catalytically active CDC42. Forms a tripartite complex with MYO18A and LURAP1 with the latter acting as an adapter connecting CDC42BPB and MYO18A. LURAP1 binding results in activation of CDC42BPB by abolition of its negative autoregulation. Interacts with STRIP1, STRN3 and SIKE1. Interacts with CPNE4 (via VWFA domain). Interacts with LURAP1. Interacts (via AGC-kinase C-terminal domain) with FAM89B/LRAP25 (via LRR repeat). Forms a tripartite complex with FAM89B/LRAP25 and LIMK1. Mg(2+) serves as cofactor. In terms of processing, proteolytically cleaved by caspases upon apoptosis induction. In terms of tissue distribution, expressed in all tissues examined, with high levels in heart, brain, placenta and lung.

Its subcellular location is the cytoplasm. It localises to the cell membrane. The protein localises to the cell junction. It is found in the cell projection. The protein resides in the lamellipodium. The enzyme catalyses L-seryl-[protein] + ATP = O-phospho-L-seryl-[protein] + ADP + H(+). It carries out the reaction L-threonyl-[protein] + ATP = O-phospho-L-threonyl-[protein] + ADP + H(+). With respect to regulation, maintained in an inactive, closed conformation by an interaction between the kinase domain and the negative autoregulatory C-terminal coiled-coil region. Agonist binding to the phorbol ester binding site disrupts this, releasing the kinase domain to allow N-terminus-mediated dimerization and kinase activation by transautophosphorylation. Inhibited by chelerythrine chloride. Functionally, serine/threonine-protein kinase which is an important downstream effector of CDC42 and plays a role in the regulation of cytoskeleton reorganization and cell migration. Regulates actin cytoskeletal reorganization via phosphorylation of PPP1R12C and MYL9/MLC2. In concert with MYO18A and LURAP1, is involved in modulating lamellar actomyosin retrograde flow that is crucial to cell protrusion and migration. Phosphorylates PPP1R12A. In concert with FAM89B/LRAP25 mediates the targeting of LIMK1 to the lamellipodium resulting in its activation and subsequent phosphorylation of CFL1 which is important for lamellipodial F-actin regulation. The polypeptide is Serine/threonine-protein kinase MRCK beta (Homo sapiens (Human)).